A 365-amino-acid chain; its full sequence is Probable caffeine synthase 4 (365 aa).

Tyr-18 is a binding site for S-adenosyl-L-homocysteine. Thr-25 serves as a coordination point for caffeine. S-adenosyl-L-homocysteine contacts are provided by Cys-61, Asn-66, Asp-98, Leu-99, Ser-134, and Phe-135. Residues Tyr-152, His-155, and Trp-156 each coordinate caffeine. 4 residues coordinate Mg(2+): Asn-173, Asp-259, Phe-261, and Asn-262. Phe-317 provides a ligand contact to caffeine.

Belongs to the methyltransferase superfamily. Type-7 methyltransferase family. Mg(2+) is required as a cofactor.

It functions in the pathway alkaloid biosynthesis. Its function is as follows. May be involved in the biosynthesis of caffeine. The protein is Probable caffeine synthase 4 of Camellia sinensis (Tea plant).